We begin with the raw amino-acid sequence, 606 residues long: Threonine--tRNA ligase (606 aa).

Positions 212 to 503 (DHRKLGVEMK…LIEHTAGELP (292 aa)) are catalytic. Zn(2+) contacts are provided by C304, H355, and H480.

Belongs to the class-II aminoacyl-tRNA synthetase family. Homodimer. The cofactor is Zn(2+).

The protein localises to the cytoplasm. It carries out the reaction tRNA(Thr) + L-threonine + ATP = L-threonyl-tRNA(Thr) + AMP + diphosphate + H(+). In terms of biological role, catalyzes the attachment of threonine to tRNA(Thr) in a two-step reaction: L-threonine is first activated by ATP to form Thr-AMP and then transferred to the acceptor end of tRNA(Thr). Also edits incorrectly charged L-seryl-tRNA(Thr). The polypeptide is Threonine--tRNA ligase (Campylobacter curvus (strain 525.92)).